A 368-amino-acid polypeptide reads, in one-letter code: Chaperone protein DnaJ (368 aa).

A J domain is found at 5-70; it reads DYYQVLGVPR…KKRKLYDTHG (66 aa). The segment at 124–201 adopts a CR-type zinc-finger fold; that stretch reads GVERQIQIPT…CNGAGRVEDH (78 aa). Zn(2+)-binding residues include Cys137, Cys140, Cys153, Cys156, Cys175, Cys178, Cys189, and Cys192. 4 CXXCXGXG motif repeats span residues 137–144, 153–160, 175–182, and 189–196; these read CTHCHGSG, CGTCRGSG, CPHCGGRG, and CKVCNGAG.

The protein belongs to the DnaJ family. As to quaternary structure, homodimer. The cofactor is Zn(2+).

The protein localises to the cytoplasm. Functionally, participates actively in the response to hyperosmotic and heat shock by preventing the aggregation of stress-denatured proteins and by disaggregating proteins, also in an autonomous, DnaK-independent fashion. Unfolded proteins bind initially to DnaJ; upon interaction with the DnaJ-bound protein, DnaK hydrolyzes its bound ATP, resulting in the formation of a stable complex. GrpE releases ADP from DnaK; ATP binding to DnaK triggers the release of the substrate protein, thus completing the reaction cycle. Several rounds of ATP-dependent interactions between DnaJ, DnaK and GrpE are required for fully efficient folding. Also involved, together with DnaK and GrpE, in the DNA replication of plasmids through activation of initiation proteins. The sequence is that of Chaperone protein DnaJ from Xylella fastidiosa (strain M23).